The sequence spans 420 residues: MPISESFARRLFPLLDELTNTYPTPFHIYDERAIVQTHRNVAQAFADSAFRQYFAVKALPTPAILSLLLKEGSGLDCSSPVELMLAERLGARGDDIVFTSNNTSLSEYQMALQAGALVTFDDRSMLEQVIALPDIVAFRVSPHGVIARSSQMGNAQQSKFGIPEAELVQSYREAWDRGARRFGIHGMMCANELSLEAAVQAGVQVIEVGARVAREAGIELEYINIGGGLGIPYRIDDQALDLTAYADALKRALKQAFPHNTPKLLMELGRYISGPHGVLVSRVINRCSKGREIVGLDASMSALMRPGLYGAYHHLTLPFADQRPEGVFDVVGALCENFDKFAVDRLLPSPLIGDLALIHDTGAHGHAMGFTYNGRLRPAELMLTDDGDVVEIRRAETFDDHTGPIQWQPVDVFNPTRCVK.

An N6-(pyridoxal phosphate)lysine modification is found at Lys57.

It belongs to the Orn/Lys/Arg decarboxylase class-II family. It depends on pyridoxal 5'-phosphate as a cofactor.

Involved in tabtoxin production and pathogenicity. This is Protein TabA (tabA) from Pseudomonas amygdali pv. tabaci (Pseudomonas syringae pv. tabaci).